Reading from the N-terminus, the 71-residue chain is Small ribosomal subunit protein bS18 (71 aa).

Belongs to the bacterial ribosomal protein bS18 family. In terms of assembly, part of the 30S ribosomal subunit. Forms a tight heterodimer with protein bS6.

In terms of biological role, binds as a heterodimer with protein bS6 to the central domain of the 16S rRNA, where it helps stabilize the platform of the 30S subunit. This is Small ribosomal subunit protein bS18 from Acaryochloris marina (strain MBIC 11017).